Reading from the N-terminus, the 240-residue chain is Putative S-adenosylmethionine-dependent methyltransferase RcsF (240 aa).

One can recognise a TsaA-like domain in the interval 5 to 142 (ISPIGHVRSC…YVPYADIVPD (138 aa)). S-adenosyl-L-methionine contacts are provided by residues 22-24 (PRQ), 63-64 (HQ), R91, and 122-125 (LDGT).

The protein belongs to the tRNA methyltransferase O family.

This is Putative S-adenosylmethionine-dependent methyltransferase RcsF (rcsF) from Pseudomonas aeruginosa.